Consider the following 380-residue polypeptide: MAPNPRKSHPLLKMINNSLIDLPAPSNISAWWNFGSLLALCLATQILTGLLLAMHYTADTTLAFSSVAHTCRDVQYGWLIRNMHANGASFFFICVYLHIGRGFYYGSYLHKETWNTGVLLLLTLMATAFVGYVLPWGQMSFWGATVITNMFSAIPYIGQTIVEWAWGGFSVDNPTLTRFFALHFLLPFLIAGLTLIHLTFLHESGSNNPLGIISNCDKIPFHPYYSLKDILGLMLLLLPLTTLALFSPNLLGDPENFTPANPLVTPPHIKPEWYFLFAYAILRSIPNKLGGVLALAASVLVLFLSPLLHKSKQRTMAFRPLSQLLFWTLVANLLILTWIGSQPLEHPFIIIGQLASTTYFTILLVLFPITSALENKMLNF.

4 helical membrane passes run 34 to 54, 78 to 99, 114 to 134, and 179 to 199; these read FGSL…LLAM, WLIR…YLHI, WNTG…GYVL, and FFAL…IHLT. Positions 84 and 98 each coordinate heme b. Heme b is bound by residues His-183 and His-197. His-202 contacts a ubiquinone. Transmembrane regions (helical) follow at residues 227-247, 289-309, 321-341, and 348-368; these read LKDI…ALFS, LGGV…PLLH, LSQL…WIGS, and FIII…VLFP.

Belongs to the cytochrome b family. As to quaternary structure, the cytochrome bc1 complex contains 11 subunits: 3 respiratory subunits (MT-CYB, CYC1 and UQCRFS1), 2 core proteins (UQCRC1 and UQCRC2) and 6 low-molecular weight proteins (UQCRH/QCR6, UQCRB/QCR7, UQCRQ/QCR8, UQCR10/QCR9, UQCR11/QCR10 and a cleavage product of UQCRFS1). This cytochrome bc1 complex then forms a dimer. The cofactor is heme b.

Its subcellular location is the mitochondrion inner membrane. Component of the ubiquinol-cytochrome c reductase complex (complex III or cytochrome b-c1 complex) that is part of the mitochondrial respiratory chain. The b-c1 complex mediates electron transfer from ubiquinol to cytochrome c. Contributes to the generation of a proton gradient across the mitochondrial membrane that is then used for ATP synthesis. This is Cytochrome b (MT-CYB) from Oceanodroma melania (Black storm-petrel).